Here is a 401-residue protein sequence, read N- to C-terminus: Argininosuccinate synthase (401 aa).

Alanine 8–serine 16 is a binding site for ATP. Residue tyrosine 85 participates in L-citrulline binding. Glycine 115 lines the ATP pocket. L-aspartate is bound by residues threonine 117, asparagine 121, and aspartate 122. Asparagine 121 provides a ligand contact to L-citrulline. L-citrulline is bound by residues arginine 125, serine 173, serine 182, glutamate 258, and tyrosine 270.

It belongs to the argininosuccinate synthase family. Type 1 subfamily. In terms of assembly, homotetramer.

Its subcellular location is the cytoplasm. It carries out the reaction L-citrulline + L-aspartate + ATP = 2-(N(omega)-L-arginino)succinate + AMP + diphosphate + H(+). The protein operates within amino-acid biosynthesis; L-arginine biosynthesis; L-arginine from L-ornithine and carbamoyl phosphate: step 2/3. This is Argininosuccinate synthase from Staphylococcus saprophyticus subsp. saprophyticus (strain ATCC 15305 / DSM 20229 / NCIMB 8711 / NCTC 7292 / S-41).